Consider the following 1022-residue polypeptide: Leucine--tRNA ligase (1022 aa).

Residues 47-57 (PYPNSPMHLGH) carry the 'HIGH' region motif. A 'KMSKS' region motif is present at residues 697–701 (KMSKS). Lysine 700 contributes to the ATP binding site.

Belongs to the class-I aminoacyl-tRNA synthetase family.

The protein localises to the cytoplasm. The catalysed reaction is tRNA(Leu) + L-leucine + ATP = L-leucyl-tRNA(Leu) + AMP + diphosphate. This chain is Leucine--tRNA ligase, found in Ignicoccus hospitalis (strain KIN4/I / DSM 18386 / JCM 14125).